The primary structure comprises 145 residues: RxLR effector protein BLR40 (145 aa).

Positions 1–22 (MLLSRAISVVALLACICCGVHT) are cleaved as a signal peptide. A RxLR-dEER motif is present at residues 44–58 (RRLRTSVDLVDNEER).

The protein belongs to the RxLR effector family.

It localises to the secreted. Its subcellular location is the host cell membrane. Secreted effector that triggers a robust hypersensitive response (HR) in Lactuca sativa cv. Design that is resistant to multiple B.lactucae races, including Bl:24. The polypeptide is RxLR effector protein BLR40 (Bremia lactucae (Lettuce downy mildew)).